The sequence spans 426 residues: Probable auxin efflux carrier component 9 (426 aa).

The Extracellular segment spans residues 1–6; it reads MITGSE. The helical transmembrane segment at 7 to 27 threads the bilayer; it reads VYQVVEAMAPLYTAAALGYGS. Residues 28-38 lie on the Cytoplasmic side of the membrane; the sequence is VRWLKAFSNEQ. A helical transmembrane segment spans residues 39–59; sequence CAGINHFVALYAVPVLIFDMV. Val-51 provides a ligand contact to (indol-3-yl)acetate. Over 60-70 the chain is Extracellular; sequence STNNVYKMNGR. The chain crosses the membrane as a helical span at residues 71–91; that stretch reads LIAADTLQKAVLLLGLMAWAL. At 92 to 114 the chain is on the cytoplasmic side; sequence WERSRARGAGAKAKAAVSSPLQW. A helical transmembrane segment spans residues 115 to 135; the sequence is VITCFSVASLPNTIIMGVPLL. (indol-3-yl)acetate is bound by residues Asn-126 and Ile-128. The Extracellular segment spans residues 136–145; that stretch reads NGMYGPVSKD. Residues 146–166 traverse the membrane as a helical segment; that stretch reads LMKQIVVMQFCIWYNVIIFLY. Tyr-159 provides a ligand contact to (indol-3-yl)acetate. At 167–286 the chain is on the cytoplasmic side; it reads EYMAARRSAS…LLQIPNTYAS (120 aa). Positions 232–258 are disordered; that stretch reads RDGVSGETTAAAKEVSSGEVAPVEEEE. A helical membrane pass occupies residues 287 to 307; sequence FLGLIWSLIAFKCGFSMPKIV. Over 308 to 310 the chain is Extracellular; sequence EDS. The chain crosses the membrane as a helical span at residues 311–331; the sequence is LFTIRTTAVGLSMFSSGTFIA. Residues 332-347 lie on the Cytoplasmic side of the membrane; that stretch reads RQSRFVPCGYKIASFS. Residues 348–368 form a helical membrane-spanning segment; the sequence is MVIKFLIGPVVMLFASLVIGM. Residues 369–371 are Extracellular-facing; that stretch reads HGT. Residues 372 to 392 traverse the membrane as a helical segment; the sequence is LLHIAVVQAALPLAVTSFVYA. Val-386 contributes to the (indol-3-yl)acetate binding site. Residues 393-405 are Cytoplasmic-facing; that stretch reads EEYKVHADIMSTG. Residues 406 to 426 traverse the membrane as a helical segment; sequence VILGIFISLPVTIVYYILLGL.

This sequence belongs to the auxin efflux carrier (TC 2.A.69.1) family. In terms of assembly, homodimer. Expressed in roots, leaves and shoot apex. Expressed in roots, stem bases, stems, leaves and young panicles.

The protein resides in the membrane. Its function is as follows. May act as a component of the auxin efflux carrier. The sequence is that of Probable auxin efflux carrier component 9 from Oryza sativa subsp. japonica (Rice).